The primary structure comprises 3433 residues: Genome polyprotein (3433 aa).

The segment at 2–15 (SKKPGGPGKSRAVN) is interaction with host EXOC1. The Cytoplasmic segment spans residues 2 to 105 (SKKPGGPGKS…NRRSSKQKKR (104 aa)). Positions 37–72 (LIDGRGPTRFVLALLAFFRFTAIAPTRAVLDRWRSV) are hydrophobic; homodimerization of capsid protein C. Residues 106 to 123 (GGKTGIAFMIGLIAGVGA) constitute a propeptide, ER anchor for the capsid protein C, removed in mature form by serine protease NS3. A helical membrane pass occupies residues 106 to 126 (GGKTGIAFMIGLIAGVGAVTL). The Extracellular portion of the chain corresponds to 127–248 (SNFQGKVMMT…KATRYLVKTE (122 aa)). Asparagine 138 carries N-linked (GlcNAc...) asparagine; by host glycosylation. A helical membrane pass occupies residues 249–269 (SWILRNPGYALVAAVIGWMLG). Residues 270–273 (SNTM) are Cytoplasmic-facing. The chain crosses the membrane as a helical span at residues 274 to 290 (QRVVFAVLLLLVAPAYS). Over 291–743 (FNCLGMSNRD…QVFGGAFRSL (453 aa)) the chain is Extracellular. 4 disulfides stabilise this stretch: cysteine 293–cysteine 320, cysteine 350–cysteine 406, cysteine 364–cysteine 395, and cysteine 382–cysteine 411. A fusion peptide region spans residues 388 to 401 (DRGWGNGCGLFGKG). Asparagine 444 carries N-linked (GlcNAc...) asparagine; by host glycosylation. 2 cysteine pairs are disulfide-bonded: cysteine 480/cysteine 578 and cysteine 595/cysteine 626. The helical transmembrane segment at 744–764 (FGGMSWITQGLLGALLLWMGI) threads the bilayer. Residues 765–770 (NARDRS) lie on the Cytoplasmic side of the membrane. Residues 771–791 (IALTFLAVGGVLLFLSVNVHA) traverse the membrane as a helical segment. The Extracellular portion of the chain corresponds to 792 to 1216 (DTGCAIDISR…AFAESNSGGD (425 aa)). 2 cysteine pairs are disulfide-bonded: cysteine 795-cysteine 806 and cysteine 846-cysteine 934. Asparagine 921, asparagine 966, and asparagine 998 each carry an N-linked (GlcNAc...) asparagine; by host glycan. Intrachain disulfides connect cysteine 970-cysteine 1014, cysteine 1071-cysteine 1120, cysteine 1082-cysteine 1103, and cysteine 1104-cysteine 1107. The chain crosses the membrane as a helical span at residues 1217-1237 (VVHLALMATFKIQPVFMVASF). Over 1238–1247 (LKARWTNQEN) the chain is Cytoplasmic. A helical transmembrane segment spans residues 1248–1268 (ILLMLAAAFFQMAYYDARQIL). Residues 1269–1288 (LWEMPDVLNSLAVAWMILRA) are Lumenal-facing. A helical membrane pass occupies residues 1289–1309 (ITFTTTSNVVVPLLALLTPGL). At 1310-1316 (RCLNLDV) the chain is on the cytoplasmic side. A helical membrane pass occupies residues 1317–1335 (YRILLLMVGIGSLIREKRS). Over 1336–1345 (AAAKKKGASL) the chain is Lumenal. A helical transmembrane segment spans residues 1346–1366 (LCLALASTGFFNPMILAAGLV). The Cytoplasmic segment spans residues 1367–1375 (ACDPNRKRG). A helical transmembrane segment spans residues 1376–1396 (WPATEVMTAVGLMFAIVGGLA). The Lumenal portion of the chain corresponds to 1397–1399 (ELD). The helical transmembrane segment at 1400-1420 (IDSMAIPMTIAGLMFAAFVIS) threads the bilayer. The Cytoplasmic portion of the chain corresponds to 1421-1477 (GKSTDMWIERTADISWEGDAEITGSSERVDVRLDDDGNFQLMNDPGAPWKIWMLRMA). Positions 1428 to 1467 (IERTADISWEGDAEITGSSERVDVRLDDDGNFQLMNDPGA) are interacts with and activates NS3 protease. An intramembrane region (helical) is located at residues 1478–1498 (CLAISAYTPWAILPSVVGFWI). Residues 1499–2174 (TLQYTKRGGV…RMALEELPDA (676 aa)) are Cytoplasmic-facing. A Peptidase S7 domain is found at 1506–1683 (GGVLWDTPSP…ERMDEPVPAG (178 aa)). Residues histidine 1556, aspartate 1580, and serine 1640 each act as charge relay system; for serine protease NS3 activity in the active site. The Helicase ATP-binding domain occupies 1686–1842 (PEMLRKKQIT…ESNAPISDLQ (157 aa)). The segment at 1690–1693 (RKKQ) is important for RNA-binding. ATP is bound at residue 1699–1706 (LHPGAGKT). A DEAH box motif is present at residues 1790-1793 (DEAH). Positions 1853 to 2018 (GYEWITEYIG…GLIAQFYQPE (166 aa)) constitute a Helicase C-terminal domain. Lysine 1894 is modified (N6-acetyllysine; by host). The regulates the ATPase activity of NS3 helicase stretch occupies residues 2169–2173 (EELPD). A helical transmembrane segment spans residues 2175-2195 (LQTIALIALLSVMTMGVFFLL). Residues 2196-2200 (MQRKG) are Lumenal-facing. Positions 2201–2221 (IGKIGLGGVVLGAATFFCWMA) form an intramembrane region, helical. Position 2222 (glutamate 2222) is a topological domain, lumenal. A helical membrane pass occupies residues 2223–2243 (VPGTKIAGMLLLSLLLMIVLI). The Cytoplasmic segment spans residues 2244–2258 (PEPEKQRSQTDNQLA). Residues 2259 to 2273 (VFLICVLTLVGAVAA) form a helical membrane-spanning segment. At 2274–2312 (NEMGWLDKTKSDISGLFGQRIETKENFSIGEFLLDLRPA) the chain is on the lumenal side. The segment at residues 2313-2333 (TAWSLYAVTTAVLTPLLKHLI) is an intramembrane region (helical). Topologically, residues 2334–2380 (TSDYITTSLTSINVQASALFTLARGFPFVDVGVSALLLAAGCWGQVT) are lumenal. Residues 2381-2401 (LTVTVTSATLLFCHYAYMVPG) traverse the membrane as a helical segment. Over 2402–2444 (WQAEAMRSAQRRTAAGIMKNAVVDGIVATDVPELERTTPIMQK) the chain is Cytoplasmic. A helical transmembrane segment spans residues 2445-2465 (KVGQVMLILVSLAALVVNPSV). The Lumenal segment spans residues 2466-2470 (KTVRE). A helical membrane pass occupies residues 2471-2491 (AGILITAAAVTLWENGASSVW). Over 2492–3433 (NATTAIGLCH…DTTLVEDTVL (942 aa)) the chain is Cytoplasmic. An mRNA cap 0-1 NS5-type MT domain is found at 2529 to 2794 (GGAKGRTLGE…DVNLGSGTRA (266 aa)). Serine 2584 serves as a coordination point for S-adenosyl-L-methionine. Serine 2584 is modified (phosphoserine). Lysine 2589 (for 2'-O-MTase activity) is an active-site residue. Residues glycine 2614, tryptophan 2615, threonine 2632, lysine 2633, aspartate 2659, and valine 2660 each coordinate S-adenosyl-L-methionine. Aspartate 2674 functions as the For 2'-O-MTase activity in the catalytic mechanism. Position 2675 (isoleucine 2675) interacts with S-adenosyl-L-methionine. Catalysis depends on for 2'-O-MTase activity residues lysine 2710 and glutamate 2746. Position 2748 (tyrosine 2748) interacts with S-adenosyl-L-methionine. A Nuclear localization signal motif is present at residues 2917–2919 (REK). The Zn(2+) site is built by glutamate 2968, histidine 2972, cysteine 2977, and cysteine 2980. In terms of domain architecture, RdRp catalytic spans 3058-3210 (GRIYADDTAG…KPLDDRFATS (153 aa)). Histidine 3245, cysteine 3261, and cysteine 3380 together coordinate Zn(2+). Positions 3431–3433 (TVL) match the PDZ-binding motif.

It in the N-terminal section; belongs to the class I-like SAM-binding methyltransferase superfamily. mRNA cap 0-1 NS5-type methyltransferase family. As to quaternary structure, homodimer; further assembles as a homotetramer. Interacts (via N-terminus) with host EXOC1 (via C-terminus); this interaction results in EXOC1 degradation through the proteasome degradation pathway. Forms heterodimers with envelope protein E in the endoplasmic reticulum and Golgi. In terms of assembly, homodimer; in the endoplasmic reticulum and Golgi. Interacts with protein prM. Interacts with non-structural protein 1. As to quaternary structure, homodimer; Homohexamer when secreted. Interacts with envelope protein E. NS1 interacts with NS4B. Interacts with host complement protein CFH; this interaction leads to the degradation of C3. Interacts (via N-terminus) with serine protease NS3. In terms of assembly, forms a heterodimer with serine protease NS3. May form homooligomers. As to quaternary structure, forms a heterodimer with NS2B. Interacts with non-structural protein 2A (via N-terminus). Interacts with NS4B. Interacts with unphosphorylated RNA-directed RNA polymerase NS5; this interaction stimulates RNA-directed RNA polymerase NS5 guanylyltransferase activity. Interacts with Serine protease/Helicase NS3. Interacts with NS1. In terms of assembly, homodimer. Interacts with host STAT2; this interaction inhibits the phosphorylation of the latter, and, when all viral proteins are present (polyprotein), targets STAT2 for degradation. Interacts with serine protease NS3. Specific enzymatic cleavages in vivo yield mature proteins. Cleavages in the lumen of endoplasmic reticulum are performed by host signal peptidase, whereas cleavages in the cytoplasmic side are performed by serine protease NS3. Signal cleavage at the 2K-4B site requires a prior NS3 protease-mediated cleavage at the 4A-2K site. In terms of processing, cleaved in post-Golgi vesicles by a host furin, releasing the mature small envelope protein M, and peptide pr. This cleavage is incomplete as up to 30% of viral particles still carry uncleaved prM. Post-translationally, N-glycosylated. N-glycosylated. The excreted form is glycosylated and this is required for efficient secretion of the protein from infected cells. In terms of processing, acetylated by host KAT5. Acetylation modulates NS3 RNA-binding and unwinding activities and plays an important positive role for viral replication. Post-translationally, phosphorylated on serines residues. This phosphorylation may trigger NS5 nuclear localization.

The protein resides in the virion. The protein localises to the host nucleus. It is found in the host cytoplasm. It localises to the host perinuclear region. Its subcellular location is the secreted. The protein resides in the virion membrane. The protein localises to the host endoplasmic reticulum membrane. It carries out the reaction Selective hydrolysis of -Xaa-Xaa-|-Yaa- bonds in which each of the Xaa can be either Arg or Lys and Yaa can be either Ser or Ala.. The enzyme catalyses RNA(n) + a ribonucleoside 5'-triphosphate = RNA(n+1) + diphosphate. It catalyses the reaction a ribonucleoside 5'-triphosphate + H2O = a ribonucleoside 5'-diphosphate + phosphate + H(+). The catalysed reaction is ATP + H2O = ADP + phosphate + H(+). It carries out the reaction a 5'-end (5'-triphosphoguanosine)-ribonucleoside in mRNA + S-adenosyl-L-methionine = a 5'-end (N(7)-methyl 5'-triphosphoguanosine)-ribonucleoside in mRNA + S-adenosyl-L-homocysteine. The enzyme catalyses a 5'-end (N(7)-methyl 5'-triphosphoguanosine)-ribonucleoside in mRNA + S-adenosyl-L-methionine = a 5'-end (N(7)-methyl 5'-triphosphoguanosine)-(2'-O-methyl-ribonucleoside) in mRNA + S-adenosyl-L-homocysteine + H(+). Its function is as follows. Plays a role in virus budding by binding to the cell membrane and gathering the viral RNA into a nucleocapsid that forms the core of a mature virus particle. During virus entry, may induce genome penetration into the host cytoplasm after hemifusion induced by the surface proteins. Can migrate to the cell nucleus where it modulates host functions. Overcomes the anti-viral effects of host EXOC1 by sequestering and degrading the latter through the proteasome degradation pathway. In terms of biological role, inhibits RNA silencing by interfering with host Dicer. Prevents premature fusion activity of envelope proteins in trans-Golgi by binding to envelope protein E at pH6.0. After virion release in extracellular space, gets dissociated from E dimers. Functionally, acts as a chaperone for envelope protein E during intracellular virion assembly by masking and inactivating envelope protein E fusion peptide. prM is the only viral peptide matured by host furin in the trans-Golgi network probably to avoid catastrophic activation of the viral fusion activity in acidic Golgi compartment prior to virion release. prM-E cleavage is inefficient, and many virions are only partially matured. These uncleaved prM would play a role in immune evasion. Its function is as follows. May play a role in virus budding. Exerts cytotoxic effects by activating a mitochondrial apoptotic pathway through M ectodomain. May display a viroporin activity. In terms of biological role, binds to host cell surface receptor and mediates fusion between viral and cellular membranes. Envelope protein is synthesized in the endoplasmic reticulum in the form of heterodimer with protein prM. They play a role in virion budding in the ER, and the newly formed immature particle is covered with 60 spikes composed of heterodimer between precursor prM and envelope protein E. The virion is transported to the Golgi apparatus where the low pH causes dissociation of PrM-E heterodimers and formation of E homodimers. prM-E cleavage is inefficient, and many virions are only partially matured. These uncleaved prM would play a role in immune evasion. Involved in immune evasion, pathogenesis and viral replication. Once cleaved off the polyprotein, is targeted to three destinations: the viral replication cycle, the plasma membrane and the extracellular compartment. Essential for viral replication. Required for formation of the replication complex and recruitment of other non-structural proteins to the ER-derived membrane structures. Excreted as a hexameric lipoparticle that plays a role against host immune response. Antagonizing the complement function. Binds to the host macrophages and dendritic cells. Inhibits signal transduction originating from Toll-like receptor 3 (TLR3). Functionally, component of the viral RNA replication complex that functions in virion assembly and antagonizes the host alpha/beta interferon antiviral response. Inhibits STAT2 translocation in the nucleus after IFN-alpha treatment. Its function is as follows. Required cofactor for the serine protease function of NS3. May have membrane-destabilizing activity and form viroporins. Inhibits STAT2 translocation in the nucleus after IFN-alpha treatment. In terms of biological role, displays three enzymatic activities: serine protease, NTPase and RNA helicase. NS3 serine protease, in association with NS2B, performs its autocleavage and cleaves the polyprotein at dibasic sites in the cytoplasm: C-prM, NS2A-NS2B, NS2B-NS3, NS3-NS4A, NS4A-2K and NS4B-NS5. NS3 RNA helicase binds RNA and unwinds dsRNA in the 3' to 5' direction. NS3 supports the separation of RNA daughter and template strands during viral replication. The helicase part is involved in the inhibition of phosphorylation of host STAT1, and thereby inhibition of host type-I IFN signaling. In addition, NS3 assists the initiation of replication by unwinding the RNA secondary structure in the 3' non-translated region (NTR). Inhibits STAT2 translocation in the nucleus after IFN-alpha treatment. Regulates the ATPase activity of the NS3 helicase activity. NS4A allows NS3 helicase to conserve energy during unwinding. Induces host ER membrane rearrangements to provide a compartment where viral replication can take part. Inhibits STAT2 translocation in the nucleus after IFN-alpha treatment. Functionally, functions as a signal peptide for NS4B and is required for the interferon antagonism activity of the latter. Its function is as follows. Induces the formation of ER-derived membrane vesicles where the viral replication takes place. Inhibits interferon (IFN)-induced host STAT1 phosphorylation and nuclear translocation, thereby preventing the establishment of cellular antiviral state by blocking the IFN-alpha/beta pathway. Inhibits STAT2 translocation in the nucleus after IFN-alpha treatment. In terms of biological role, replicates the viral (+) and (-) genome, and performs the capping of genomes in the cytoplasm. NS5 methylates viral RNA cap at guanine N-7 and ribose 2'-O positions. Besides its role in genome replication, also prevents the establishment of cellular antiviral state by blocking the interferon-alpha/beta (IFN-alpha/beta) signaling pathway. Inhibits host JAK1 and TYK2 phosphorylation, thereby preventing activation of JAK-STAT signaling pathway. May transcriptionally regulate host genes involved in antiviral response when localized in the nucleus. This chain is Genome polyprotein, found in Ciconiiformes (storks and others).